Here is a 351-residue protein sequence, read N- to C-terminus: Outer membrane porin PhoE (351 aa).

The first 21 residues, 1-21 (MKKSTLALVVMGIVASASVQA), serve as a signal peptide directing secretion.

It belongs to the Gram-negative porin family. Homotrimer. Forms mixed heterotrimers with OmpC and with OmpF; other mixed heterotrimers are also probable.

It localises to the cell outer membrane. Its function is as follows. Uptake of inorganic phosphate, phosphorylated compounds, and some other negatively charged solutes. This Escherichia coli (strain K12) protein is Outer membrane porin PhoE (phoE).